The following is a 387-amino-acid chain: Cyclin-J-like protein (387 aa).

The Cyclin N-terminal domain occupies 13-142 (DVHCTLREKE…LLEAFSWDLC (130 aa)).

This sequence belongs to the cyclin family. Cyclin J subfamily.

The chain is Cyclin-J-like protein (Ccnjl) from Mus musculus (Mouse).